We begin with the raw amino-acid sequence, 685 residues long: Protein hook (685 aa).

Residues 6-122 form the Calponin-homology (CH) domain; it reads MEIYESLIRW…RLLQLILGCA (117 aa). Residues 134 to 570 adopt a coiled-coil conformation; it reads QIMELEESLQ…LLAADSRYKK (437 aa). Disordered regions lie at residues 430 to 449, 593 to 625, and 661 to 685; these read AAED…SSDV, LEKP…SGRV, and PGQS…FAKK. The span at 602–623 shows a compositional bias: low complexity; it reads ASSSSATGSGGDASTLTSTGSG. Over residues 661 to 670 the composition is skewed to polar residues; it reads PGQSFLSRQR.

The protein belongs to the hook family. In terms of assembly, homodimer. Interacts with microtubules via its N-terminus.

It is found in the cytoplasm. It localises to the cytoskeleton. The protein localises to the endosome. Involved in endocytic trafficking. Probably acts as a cytoskeletal linker protein that tethers endosome vesicles to the cytoskeleton. This is Protein hook from Aedes aegypti (Yellowfever mosquito).